The sequence spans 396 residues: Ornithine aminotransferase (396 aa).

At K255 the chain carries N6-(pyridoxal phosphate)lysine.

Belongs to the class-III pyridoxal-phosphate-dependent aminotransferase family. OAT subfamily. Pyridoxal 5'-phosphate is required as a cofactor.

The protein localises to the cytoplasm. It catalyses the reaction a 2-oxocarboxylate + L-ornithine = L-glutamate 5-semialdehyde + an L-alpha-amino acid. It functions in the pathway amino-acid biosynthesis; L-proline biosynthesis; L-glutamate 5-semialdehyde from L-ornithine: step 1/1. In terms of biological role, catalyzes the interconversion of ornithine to glutamate semialdehyde. This Staphylococcus epidermidis (strain ATCC 12228 / FDA PCI 1200) protein is Ornithine aminotransferase.